We begin with the raw amino-acid sequence, 515 residues long: Protein translocase subunit SecD (515 aa).

The chain crosses the membrane as a helical span at residues 6-26 (LYSLIFIIILTAFAVWVDLPG). The segment at 141 to 186 (AITNGNQNQNSTKNGTPTPGTTPTPESTPQANQTPVAANVTPTPED) is disordered. The span at 150 to 169 (NSTKNGTPTPGTTPTPESTP) shows a compositional bias: low complexity. Residues 170–186 (QANQTPVAANVTPTPED) are compositionally biased toward polar residues. Helical transmembrane passes span 322–342 (RSIRAGLIGIGAVALFMILYY), 344–364 (LPGFVSVVALAIYAAVVFALF), 367–387 (IPVTLTLAGIAGFILSVGMAV), 427–447 (ISTLITCAILIWFGSRFGASV), and 450–470 (GFAITLAIGVIVSMFTAIFVT).

This sequence belongs to the SecD/SecF family. SecD subfamily. As to quaternary structure, forms a complex with SecF. Part of the essential Sec protein translocation apparatus which comprises SecA, SecYEG and auxiliary proteins SecDF. Other proteins may also be involved.

The protein localises to the cell membrane. Functionally, part of the Sec protein translocase complex. Interacts with the SecYEG preprotein conducting channel. SecDF uses the proton motive force (PMF) to complete protein translocation after the ATP-dependent function of SecA. This Thermobaculum terrenum (strain ATCC BAA-798 / CCMEE 7001 / YNP1) protein is Protein translocase subunit SecD.